A 477-amino-acid polypeptide reads, in one-letter code: Aspartyl/glutamyl-tRNA(Asn/Gln) amidotransferase subunit B (477 aa).

It belongs to the GatB/GatE family. GatB subfamily. Heterotrimer of A, B and C subunits.

It catalyses the reaction L-glutamyl-tRNA(Gln) + L-glutamine + ATP + H2O = L-glutaminyl-tRNA(Gln) + L-glutamate + ADP + phosphate + H(+). The enzyme catalyses L-aspartyl-tRNA(Asn) + L-glutamine + ATP + H2O = L-asparaginyl-tRNA(Asn) + L-glutamate + ADP + phosphate + 2 H(+). In terms of biological role, allows the formation of correctly charged Asn-tRNA(Asn) or Gln-tRNA(Gln) through the transamidation of misacylated Asp-tRNA(Asn) or Glu-tRNA(Gln) in organisms which lack either or both of asparaginyl-tRNA or glutaminyl-tRNA synthetases. The reaction takes place in the presence of glutamine and ATP through an activated phospho-Asp-tRNA(Asn) or phospho-Glu-tRNA(Gln). This is Aspartyl/glutamyl-tRNA(Asn/Gln) amidotransferase subunit B from Legionella pneumophila (strain Corby).